Reading from the N-terminus, the 345-residue chain is 4-hydroxy-2-oxovalerate aldolase 1 (345 aa).

Positions 9–261 (IRVTDTSLRD…RTGIDFFAIA (253 aa)) constitute a Pyruvate carboxyltransferase domain. Residue 17-18 (RD) coordinates substrate. Aspartate 18 is a Mn(2+) binding site. Histidine 21 (proton acceptor) is an active-site residue. Positions 171 and 200 each coordinate substrate. Positions 200 and 202 each coordinate Mn(2+). Tyrosine 291 is a binding site for substrate.

The protein belongs to the 4-hydroxy-2-oxovalerate aldolase family.

The catalysed reaction is (S)-4-hydroxy-2-oxopentanoate = acetaldehyde + pyruvate. The chain is 4-hydroxy-2-oxovalerate aldolase 1 from Nocardia farcinica (strain IFM 10152).